The sequence spans 146 residues: Tol-Pal system protein TolR (146 aa).

Residues valine 16–methionine 36 form a helical membrane-spanning segment.

The protein belongs to the ExbD/TolR family. The Tol-Pal system is composed of five core proteins: the inner membrane proteins TolA, TolQ and TolR, the periplasmic protein TolB and the outer membrane protein Pal. They form a network linking the inner and outer membranes and the peptidoglycan layer.

It localises to the cell inner membrane. Functionally, part of the Tol-Pal system, which plays a role in outer membrane invagination during cell division and is important for maintaining outer membrane integrity. This chain is Tol-Pal system protein TolR, found in Pseudomonas aeruginosa (strain ATCC 15692 / DSM 22644 / CIP 104116 / JCM 14847 / LMG 12228 / 1C / PRS 101 / PAO1).